Reading from the N-terminus, the 79-residue chain is Large ribosomal subunit protein bL28 (79 aa).

The protein belongs to the bacterial ribosomal protein bL28 family.

This chain is Large ribosomal subunit protein bL28, found in Porphyromonas gingivalis (strain ATCC 33277 / DSM 20709 / CIP 103683 / JCM 12257 / NCTC 11834 / 2561).